An 872-amino-acid chain; its full sequence is FHIP family protein CBG19667 (872 aa).

The disordered stretch occupies residues 800–841; the sequence is SRSSPRSADEHDSTLFYGRSTIPPPGRKPLLREPSHQETLDD. Residues 829 to 841 are compositionally biased toward basic and acidic residues; that stretch reads LLREPSHQETLDD.

Belongs to the FHIP family.

In Caenorhabditis briggsae, this protein is FHIP family protein CBG19667.